Here is a 598-residue protein sequence, read N- to C-terminus: Torsin-1A-interacting protein 1 (598 aa).

The Nuclear portion of the chain corresponds to 1–351 (MAGEGRRAEA…PQNASFVKRN (351 aa)). 2 disordered regions span residues 19–254 (VTPR…RSSS) and 267–314 (QNFT…IYGS). A Phosphoserine modification is found at serine 60. Composition is skewed to basic and acidic residues over residues 73-101 (LVDK…EVRE) and 115-124 (RPQEAEEMKT). Residues serine 135, serine 143, serine 154, serine 156, serine 157, and serine 187 each carry the phosphoserine modification. The span at 205–214 (EATSVQQKVN) shows a compositional bias: polar residues. Residue serine 216 is modified to Phosphoserine. Position 221 is a phosphothreonine (threonine 221). Residues serine 227, serine 230, and serine 242 each carry the phosphoserine modification. Positions 238–250 (RSRDSDESGDKTT) are enriched in basic and acidic residues. Composition is skewed to polar residues over residues 277 to 287 (SVLSSGYQKTP) and 300 to 313 (RMQT…SIYG). Serine 320 carries the post-translational modification Phosphoserine. Residues 322–341 (LKSELGNQSPSTSSQQVTGQ) form a disordered region. Lysine 323 participates in a covalent cross-link: Glycyl lysine isopeptide (Lys-Gly) (interchain with G-Cter in SUMO2). The segment covering 326-341 (LGNQSPSTSSQQVTGQ) has biased composition (polar residues). A Phosphoserine modification is found at serine 330. A helical membrane pass occupies residues 352–372 (WWWLLPLIAALASGSFWFFST). An interaction with TOR1A region spans residues 371–598 (STPEVETTAV…ENALKRGICL (228 aa)). The Perinuclear space segment spans residues 373-598 (PEVETTAVQE…ENALKRGICL (226 aa)). Residues 374–450 (EVETTAVQEF…SEQIADAYSS (77 aa)) adopt a coiled-coil conformation. N-linked (GlcNAc...) asparagine glycosylation is present at asparagine 414.

Belongs to the TOR1AIP family. In terms of assembly, interacts with ATP1B4. Interacts with TOR1A (ATP-bound). Interacts with TOR1B, TOR2A and TOR3A.

The protein resides in the nucleus inner membrane. Required for nuclear membrane integrity. Induces TOR1A and TOR1B ATPase activity and is required for their location on the nuclear membrane. Binds to A- and B-type lamins. Possible role in membrane attachment and assembly of the nuclear lamina. This chain is Torsin-1A-interacting protein 1 (TOR1AIP1), found in Pongo abelii (Sumatran orangutan).